Here is a 345-residue protein sequence, read N- to C-terminus: DNA N(6)-methyladenine demethylase ALKBH1A (345 aa).

Substrate is bound by residues W179 and 186-188 (FDW). The Fe2OG dioxygenase domain occupies 225–345 (RPEGAIVNYF…RININIRQVF (121 aa)). A 2-oxoglutarate-binding site is contributed by 232–234 (NYF). H243, D245, and H299 together coordinate Fe cation. 2-oxoglutarate is bound at residue 336 to 342 (RININIR).

Belongs to the alkB family. Fe(2+) serves as cofactor. Mostly expressed in siliques, to a lower extent in roots, seedlings and rosette leaves, but barely in cauline leaves, stems and flowers.

The protein resides in the nucleus. It is found in the cytoplasm. It catalyses the reaction an N(6)-methyl-2'-deoxyadenosine in DNA + 2-oxoglutarate + O2 = a 2'-deoxyadenosine in DNA + formaldehyde + succinate + CO2. Dioxygenase that catalyzes DNA N(6)-methyladenine (6 mA) demethylation to modulate gene expression and regulate seed germination. The chain is DNA N(6)-methyladenine demethylase ALKBH1A from Arabidopsis thaliana (Mouse-ear cress).